Consider the following 371-residue polypeptide: 4-hydroxy-3-methylbut-2-en-1-yl diphosphate synthase (flavodoxin) (371 aa).

[4Fe-4S] cluster-binding residues include Cys-270, Cys-273, Cys-305, and Glu-312.

The protein belongs to the IspG family. It depends on [4Fe-4S] cluster as a cofactor.

It catalyses the reaction (2E)-4-hydroxy-3-methylbut-2-enyl diphosphate + oxidized [flavodoxin] + H2O + 2 H(+) = 2-C-methyl-D-erythritol 2,4-cyclic diphosphate + reduced [flavodoxin]. It participates in isoprenoid biosynthesis; isopentenyl diphosphate biosynthesis via DXP pathway; isopentenyl diphosphate from 1-deoxy-D-xylulose 5-phosphate: step 5/6. In terms of biological role, converts 2C-methyl-D-erythritol 2,4-cyclodiphosphate (ME-2,4cPP) into 1-hydroxy-2-methyl-2-(E)-butenyl 4-diphosphate. The sequence is that of 4-hydroxy-3-methylbut-2-en-1-yl diphosphate synthase (flavodoxin) from Shewanella sediminis (strain HAW-EB3).